A 480-amino-acid chain; its full sequence is tRNA-2-methylthio-N(6)-dimethylallyladenosine synthase (480 aa).

Residues 43–161 (KLYCLNTFGC…FPELLYSAMD (119 aa)) form the MTTase N-terminal domain. [4Fe-4S] cluster is bound by residues Cys-52, Cys-88, Cys-122, Cys-198, Cys-202, and Cys-205. The Radical SAM core domain occupies 184–414 (RKDGVKAWVT…LETQNRISKE (231 aa)). In terms of domain architecture, TRAM spans 417 to 480 (DTFLGKVVEV…TWSLEGSIVR (64 aa)).

This sequence belongs to the methylthiotransferase family. MiaB subfamily. In terms of assembly, monomer. [4Fe-4S] cluster serves as cofactor.

The protein localises to the cytoplasm. It carries out the reaction N(6)-dimethylallyladenosine(37) in tRNA + (sulfur carrier)-SH + AH2 + 2 S-adenosyl-L-methionine = 2-methylsulfanyl-N(6)-dimethylallyladenosine(37) in tRNA + (sulfur carrier)-H + 5'-deoxyadenosine + L-methionine + A + S-adenosyl-L-homocysteine + 2 H(+). In terms of biological role, catalyzes the methylthiolation of N6-(dimethylallyl)adenosine (i(6)A), leading to the formation of 2-methylthio-N6-(dimethylallyl)adenosine (ms(2)i(6)A) at position 37 in tRNAs that read codons beginning with uridine. The protein is tRNA-2-methylthio-N(6)-dimethylallyladenosine synthase of Acetivibrio thermocellus (strain ATCC 27405 / DSM 1237 / JCM 9322 / NBRC 103400 / NCIMB 10682 / NRRL B-4536 / VPI 7372) (Clostridium thermocellum).